Reading from the N-terminus, the 108-residue chain is Phosphoribosyl-ATP pyrophosphatase (108 aa).

It belongs to the PRA-PH family.

It is found in the cytoplasm. It catalyses the reaction 1-(5-phospho-beta-D-ribosyl)-ATP + H2O = 1-(5-phospho-beta-D-ribosyl)-5'-AMP + diphosphate + H(+). It functions in the pathway amino-acid biosynthesis; L-histidine biosynthesis; L-histidine from 5-phospho-alpha-D-ribose 1-diphosphate: step 2/9. The chain is Phosphoribosyl-ATP pyrophosphatase from Aromatoleum aromaticum (strain DSM 19018 / LMG 30748 / EbN1) (Azoarcus sp. (strain EbN1)).